The chain runs to 221 residues: Ribosome maturation factor RimM (221 aa).

Residues 1 to 23 form a disordered region; the sequence is MTERKQGAAAPRPLNRPQGESPK. In terms of domain architecture, PRC barrel spans 144-221; the sequence is ENEFYWVDLI…RIVVDWGLDY (78 aa).

The protein belongs to the RimM family. Binds ribosomal protein uS19.

The protein resides in the cytoplasm. Functionally, an accessory protein needed during the final step in the assembly of 30S ribosomal subunit, possibly for assembly of the head region. Essential for efficient processing of 16S rRNA. May be needed both before and after RbfA during the maturation of 16S rRNA. It has affinity for free ribosomal 30S subunits but not for 70S ribosomes. In Cupriavidus pinatubonensis (strain JMP 134 / LMG 1197) (Cupriavidus necator (strain JMP 134)), this protein is Ribosome maturation factor RimM.